A 633-amino-acid chain; its full sequence is ATP-dependent RNA helicase mss116, mitochondrial (633 aa).

The N-terminal 32 residues, 1–32 (MKTGRTRPLRVFDILVPPWPPTVPHRIKLPRG), are a transit peptide targeting the mitochondrion. The short motif at 38–66 (EFYSAITRNWNKLKGLKNCWQIWKDVQEI) is the Q motif element. The region spanning 70–248 (IRKYQGESTV…TAEKLSNIQT (179 aa)) is the Helicase ATP-binding domain. 83–90 (PGNNDGAH) lines the ATP pocket. The short motif at 195–198 (RPLE) is the DEAD box element. Residues 262-429 (FLADVKRILQ…NVDLVIQVGL (168 aa)) form the Helicase C-terminal domain. A disordered region spans residues 567 to 633 (FNYATGNDLN…GGRGGKPRAA (67 aa)).

Belongs to the DEAD box helicase family. DDX18/HAS1 subfamily.

The protein localises to the mitochondrion matrix. It carries out the reaction ATP + H2O = ADP + phosphate + H(+). Its function is as follows. ATP-dependent RNA helicase required for mitochondrial splicing of group I and II introns. Also required for efficient mitochondrial translation. In Aspergillus oryzae (strain ATCC 42149 / RIB 40) (Yellow koji mold), this protein is ATP-dependent RNA helicase mss116, mitochondrial (mss116).